Reading from the N-terminus, the 688-residue chain is Putative proline--tRNA ligase YHR020W (688 aa).

S149 bears the Phosphoserine mark. At T170 the chain carries Phosphothreonine. A disordered region spans residues 631-650; it reads ESSAKKDDGEEFEEDDKAPS. Position 655 is a phosphoserine (S655).

It belongs to the class-II aminoacyl-tRNA synthetase family.

It carries out the reaction tRNA(Pro) + L-proline + ATP = L-prolyl-tRNA(Pro) + AMP + diphosphate. This is Putative proline--tRNA ligase YHR020W from Saccharomyces cerevisiae (strain ATCC 204508 / S288c) (Baker's yeast).